A 308-amino-acid chain; its full sequence is Ribonuclease HIII (308 aa).

The RNase H type-2 domain occupies 92-308; it reads DNHIGSDEAG…ANTQKAQKLL (217 aa). A divalent metal cation contacts are provided by D98, E99, and D204.

Belongs to the RNase HII family. RnhC subfamily. Mn(2+) serves as cofactor. Requires Mg(2+) as cofactor.

It localises to the cytoplasm. It carries out the reaction Endonucleolytic cleavage to 5'-phosphomonoester.. Functionally, endonuclease that specifically degrades the RNA of RNA-DNA hybrids. This chain is Ribonuclease HIII, found in Oceanobacillus iheyensis (strain DSM 14371 / CIP 107618 / JCM 11309 / KCTC 3954 / HTE831).